Here is a 289-residue protein sequence, read N- to C-terminus: Borealin (289 aa).

The required for interaction with INCENP stretch occupies residues 1 to 58; the sequence is MAPKKRSSRGTRTNTLRSRKLASFLKDFDREVQVRTKQIESDRQTLLKEVENLYNIEI. A required for centromere localization region spans residues 1 to 88; sequence MAPKKRSSRG…NKQALEEAAK (88 aa). A required for interaction with SENP3 region spans residues 1–150; the sequence is MAPKKRSSRG…KKSHKNLRSA (150 aa). The interval 10–109 is required to form a minimal CPC core complex that localizes to the central spindle and midbody and properly executes the role of the CPC during cytokinesis; the sequence is GTRTNTLRSR…TAEAIQTPLK (100 aa). Residues 20-78 are required for interaction with INCENP and BIRC5; the sequence is KLASFLKDFDREVQVRTKQIESDRQTLLKEVENLYNIEILRLPKALQGMKWLDYFALGG. At Arg-91 the chain carries Citrulline. Thr-94 is modified (phosphothreonine; by TTK). Residue Thr-106 is modified to Phosphothreonine. Position 110 is a phosphoserine (Ser-110). Positions 122 to 173 are disordered; it reads SIKEEEEEEEEGGGGGGRTKKSHKNLRSAKVKRCLPSKKRTQSIQGRGRSKR. The segment covering 123 to 133 has biased composition (acidic residues); sequence IKEEEEEEEEG. Over residues 139–162 the composition is skewed to basic residues; it reads RTKKSHKNLRSAKVKRCLPSKKRT. Residue Lys-145 forms a Glycyl lysine isopeptide (Lys-Gly) (interchain with G-Cter in SUMO2) linkage. Ser-175 bears the Phosphoserine mark. A phosphothreonine mark is found at Thr-198 and Thr-213. Phosphoserine occurs at positions 228, 233, 247, and 253.

It belongs to the borealin family. As to quaternary structure, may form homooligomers and homodimers. Component of the chromosomal passenger complex (CPC) composed of at least BIRC5/survivin, CDCA8/borealin, INCENP, AURKB or AURKC; in the complex forms a triple-helix bundle-based subcomplex with INCENP and BIRC5. Interacts with SENP3, UBE2I and RANBP2. Interacts (phosphorylated) with SGO1 and SGO2A; the association is dependent on CDK1. In terms of processing, phosphorylated by TTK, essentially at Thr-94. Phosphorylation (probably by CDK1) promotes targeting of the CPC to centromeric DNA. Sumoylated by UBE2I and RANBP2. Desumoylated by SENP3 through the removal of SUMO2 and SUMO3. Post-translationally, citrullinated by PADI4.

It localises to the nucleus. The protein resides in the nucleolus. It is found in the cytoplasm. Its subcellular location is the chromosome. The protein localises to the centromere. It localises to the cytoskeleton. The protein resides in the spindle. Functionally, component of the chromosomal passenger complex (CPC), a complex that acts as a key regulator of mitosis. The CPC complex has essential functions at the centromere in ensuring correct chromosome alignment and segregation and is required for chromatin-induced microtubule stabilization and spindle assembly. In the complex, it may be required to direct the CPC to centromeric DNA. Major effector of the TTK kinase in the control of attachment-error-correction and chromosome alignment. This chain is Borealin (Cdca8), found in Mus musculus (Mouse).